We begin with the raw amino-acid sequence, 506 residues long: bZIP transcription factor TGA10 (506 aa).

2 disordered regions span residues 22–50 and 113–218; these read VSYM…HQHH and PSSI…KTLR. Composition is skewed to polar residues over residues 25-45, 113-124, 142-152, and 160-180; these read MDSS…SFGG, PSSIQEQRQNSG, PSTTNKMNTGL, and SKRS…NDAP. The span at 207 to 216 shows a compositional bias: basic and acidic residues; it reads DAPKTPDPKT. The 45-residue stretch at 213–257 folds into the bZIP domain; sequence DPKTLRRLAQNREAARKSRLRKKAYVQQLESSRIRLTQLEQELQR. The segment at 215–235 is basic motif; that stretch reads KTLRRLAQNREAARKSRLRKK. The Nuclear localization signal motif lies at 217 to 224; it reads LRRLAQNR. Residues 241–255 are leucine-zipper; sequence LESSRIRLTQLEQEL. The 215-residue stretch at 288 to 502 folds into the DOG1 domain; it reads AAVFDMEYAR…RALSSLWHAR (215 aa).

It belongs to the bZIP family. Binds DNA as a dimer. Interacts with TGA2.2. As to expression, specifically expressed in roots.

It localises to the nucleus. Transcription activator that binds to as1-like elements (5'-TGACGTAAgggaTGACGCA-3') in promoters of target genes. Regulates transcription in response to plant signaling molecules salicylic acid (SA), methyl jasmonate (MJ) and auxin (2,4D) only in leaves. Prevents lateral branching and may repress defense signaling. The sequence is that of bZIP transcription factor TGA10 from Nicotiana tabacum (Common tobacco).